A 336-amino-acid chain; its full sequence is tRNA N6-adenosine threonylcarbamoyltransferase (336 aa).

Residues H114 and H118 each contribute to the Fe cation site. Substrate contacts are provided by residues 136-140 (LVSGG), D169, G182, D186, and N275. Position 301 (D301) interacts with Fe cation.

This sequence belongs to the KAE1 / TsaD family. Fe(2+) serves as cofactor.

The protein localises to the cytoplasm. The enzyme catalyses L-threonylcarbamoyladenylate + adenosine(37) in tRNA = N(6)-L-threonylcarbamoyladenosine(37) in tRNA + AMP + H(+). Functionally, required for the formation of a threonylcarbamoyl group on adenosine at position 37 (t(6)A37) in tRNAs that read codons beginning with adenine. Is involved in the transfer of the threonylcarbamoyl moiety of threonylcarbamoyl-AMP (TC-AMP) to the N6 group of A37, together with TsaE and TsaB. TsaD likely plays a direct catalytic role in this reaction. This is tRNA N6-adenosine threonylcarbamoyltransferase from Streptococcus pneumoniae serotype 4 (strain ATCC BAA-334 / TIGR4).